The primary structure comprises 364 residues: Aminomethyltransferase (364 aa).

The protein belongs to the GcvT family. The glycine cleavage system is composed of four proteins: P, T, L and H.

The catalysed reaction is N(6)-[(R)-S(8)-aminomethyldihydrolipoyl]-L-lysyl-[protein] + (6S)-5,6,7,8-tetrahydrofolate = N(6)-[(R)-dihydrolipoyl]-L-lysyl-[protein] + (6R)-5,10-methylene-5,6,7,8-tetrahydrofolate + NH4(+). Its function is as follows. The glycine cleavage system catalyzes the degradation of glycine. This Shewanella denitrificans (strain OS217 / ATCC BAA-1090 / DSM 15013) protein is Aminomethyltransferase.